Reading from the N-terminus, the 280-residue chain is Undecaprenyl-diphosphatase (280 aa).

8 helical membrane-spanning segments follow: residues 1-21, 41-61, 87-107, 115-135, 147-167, 186-206, 226-246, and 260-280; these read MTIL…FLPV, FVRA…LVLY, FDLY…GFLF, LGSV…MLFV, ITYP…FLPG, KAAA…ATLL, VLLV…KFFI, and YRIL…SLAV.

It belongs to the UppP family.

Its subcellular location is the cell inner membrane. The catalysed reaction is di-trans,octa-cis-undecaprenyl diphosphate + H2O = di-trans,octa-cis-undecaprenyl phosphate + phosphate + H(+). In terms of biological role, catalyzes the dephosphorylation of undecaprenyl diphosphate (UPP). Confers resistance to bacitracin. This chain is Undecaprenyl-diphosphatase, found in Porphyromonas gingivalis (strain ATCC BAA-308 / W83).